The primary structure comprises 314 residues: Methionyl-tRNA formyltransferase (314 aa).

110–113 (SLLP) serves as a coordination point for (6S)-5,6,7,8-tetrahydrofolate.

Belongs to the Fmt family.

It carries out the reaction L-methionyl-tRNA(fMet) + (6R)-10-formyltetrahydrofolate = N-formyl-L-methionyl-tRNA(fMet) + (6S)-5,6,7,8-tetrahydrofolate + H(+). Functionally, attaches a formyl group to the free amino group of methionyl-tRNA(fMet). The formyl group appears to play a dual role in the initiator identity of N-formylmethionyl-tRNA by promoting its recognition by IF2 and preventing the misappropriation of this tRNA by the elongation apparatus. This chain is Methionyl-tRNA formyltransferase, found in Bacillus cereus (strain ATCC 14579 / DSM 31 / CCUG 7414 / JCM 2152 / NBRC 15305 / NCIMB 9373 / NCTC 2599 / NRRL B-3711).